A 381-amino-acid polypeptide reads, in one-letter code: Cytochrome b (381 aa).

Transmembrane regions (helical) follow at residues 33-53 (FGSLLGICLIIQILTGLFLAM), 77-98 (WLLRNLHANGASMFFMCLFLHV), 113-133 (WNIGVILLLTVMATAFVGYVL), and 178-198 (FFAFHFILPFIITALAVVHLL). The heme b site is built by His-83 and His-97. The heme b site is built by His-182 and His-196. A ubiquinone is bound at residue His-201. The next 4 membrane-spanning stretches (helical) occupy residues 226–246 (IKDALGLMLLLLMLLLLALFS), 288–308 (LGGVLALLASILILLIIPLLH), 320–340 (ISQTLFWILTANLITLTWIGG), and 347–367 (FIIIGQLAPMLYFLLILVLMP).

This sequence belongs to the cytochrome b family. In terms of assembly, the cytochrome bc1 complex contains 11 subunits: 3 respiratory subunits (MT-CYB, CYC1 and UQCRFS1), 2 core proteins (UQCRC1 and UQCRC2) and 6 low-molecular weight proteins (UQCRH/QCR6, UQCRB/QCR7, UQCRQ/QCR8, UQCR10/QCR9, UQCR11/QCR10 and a cleavage product of UQCRFS1). This cytochrome bc1 complex then forms a dimer. Heme b serves as cofactor.

The protein localises to the mitochondrion inner membrane. Functionally, component of the ubiquinol-cytochrome c reductase complex (complex III or cytochrome b-c1 complex) that is part of the mitochondrial respiratory chain. The b-c1 complex mediates electron transfer from ubiquinol to cytochrome c. Contributes to the generation of a proton gradient across the mitochondrial membrane that is then used for ATP synthesis. This Pseudantechinus bilarni (Sandstone dibbler) protein is Cytochrome b (MT-CYB).